A 737-amino-acid polypeptide reads, in one-letter code: Polyribonucleotide nucleotidyltransferase (737 aa).

2 residues coordinate Mg(2+): D489 and D495. Positions 556-615 (PKIDTIKIDVDKIKIVIGKGGETIDKIIAETGVKIDIDEEGNVSIYSSDQDAINRAKEII) constitute a KH domain. In terms of domain architecture, S1 motif spans 625 to 693 (DEVYRAKVVR…EKGRIDASMK (69 aa)). A disordered region spans residues 691-737 (SMKALLPRPPKPEHDEKGEKSERPHRPRHQKDYKPKKEFTETSKDSE). The segment covering 700–737 (PKPEHDEKGEKSERPHRPRHQKDYKPKKEFTETSKDSE) has biased composition (basic and acidic residues).

It belongs to the polyribonucleotide nucleotidyltransferase family. Requires Mg(2+) as cofactor.

The protein localises to the cytoplasm. The catalysed reaction is RNA(n+1) + phosphate = RNA(n) + a ribonucleoside 5'-diphosphate. Involved in mRNA degradation. Catalyzes the phosphorolysis of single-stranded polyribonucleotides processively in the 3'- to 5'-direction. This chain is Polyribonucleotide nucleotidyltransferase, found in Streptococcus pneumoniae serotype 4 (strain ATCC BAA-334 / TIGR4).